A 101-amino-acid polypeptide reads, in one-letter code: Small ribosomal subunit protein uS14 (101 aa).

This sequence belongs to the universal ribosomal protein uS14 family. Part of the 30S ribosomal subunit. Contacts proteins S3 and S10.

Functionally, binds 16S rRNA, required for the assembly of 30S particles and may also be responsible for determining the conformation of the 16S rRNA at the A site. This Burkholderia vietnamiensis (strain G4 / LMG 22486) (Burkholderia cepacia (strain R1808)) protein is Small ribosomal subunit protein uS14.